Here is a 197-residue protein sequence, read N- to C-terminus: uncharacterized protein (197 aa).

A run of 4 helical transmembrane segments spans residues 9-29, 67-87, 104-124, and 160-180; these read IYIL…RFIL, LASL…ILML, IIAV…ISVI, and GLDL…MLVI.

Belongs to the YggT family.

It is found in the cell membrane. This is an uncharacterized protein from Pseudomonas aeruginosa (strain ATCC 15692 / DSM 22644 / CIP 104116 / JCM 14847 / LMG 12228 / 1C / PRS 101 / PAO1).